The chain runs to 348 residues: Alcohol dehydrogenase 2 (348 aa).

Positions 44, 67, 98, 101, 104, 112, and 154 each coordinate Zn(2+). NAD(+) is bound by residues 178 to 184 (GAAGGLG), aspartate 202, lysine 207, 269 to 271 (VGL), and arginine 341.

Belongs to the zinc-containing alcohol dehydrogenase family. As to quaternary structure, homotetramer. It depends on Zn(2+) as a cofactor.

It localises to the cytoplasm. The catalysed reaction is a primary alcohol + NAD(+) = an aldehyde + NADH + H(+). It carries out the reaction a secondary alcohol + NAD(+) = a ketone + NADH + H(+). The polypeptide is Alcohol dehydrogenase 2 (ADH2) (Candida albicans (strain SC5314 / ATCC MYA-2876) (Yeast)).